A 231-amino-acid polypeptide reads, in one-letter code: Ion-translocating oxidoreductase complex subunit E (231 aa).

A run of 6 helical transmembrane segments spans residues 18 to 38 (ALVQLLGLCPLLAVTSTATNA), 39 to 59 (LGLGLATTLVLTLTNLTISTL), 63 to 83 (TPAEIRIPIYVMIIASVVSAV), 86 to 106 (LINAYAFGLYQSLGIFIPLIV), 125 to 145 (ALSALDGFSIGMGATCAMFVL), and 182 to 202 (PFLLAMLPPGAFIGLGLMLAG).

It belongs to the NqrDE/RnfAE family. As to quaternary structure, the complex is composed of six subunits: RsxA, RsxB, RsxC, RsxD, RsxE and RsxG.

The protein localises to the cell inner membrane. Part of a membrane-bound complex that couples electron transfer with translocation of ions across the membrane. Required to maintain the reduced state of SoxR. The sequence is that of Ion-translocating oxidoreductase complex subunit E from Escherichia coli O6:H1 (strain CFT073 / ATCC 700928 / UPEC).